The following is a 481-amino-acid chain: Probable zeta-carotene desaturase (481 aa).

Belongs to the zeta carotene desaturase family. The cofactor is decylplastoquinone. It depends on 6-decylubiquinone as a cofactor.

It carries out the reaction 9,9'-di-cis-zeta-carotene + 2 a quinone = 7,7',9,9'-tetra-cis-lycopene + 2 a quinol. It functions in the pathway carotenoid biosynthesis; lycopene biosynthesis. Its function is as follows. Catalyzes the conversion of zeta-carotene to lycopene via the intermediary of neurosporene. It carries out two consecutive desaturations (introduction of double bonds) at positions C-7 and C-7'. The sequence is that of Probable zeta-carotene desaturase (zds) from Synechococcus elongatus (strain ATCC 33912 / PCC 7942 / FACHB-805) (Anacystis nidulans R2).